The sequence spans 239 residues: THAP domain-containing protein 3 (239 aa).

The THAP-type zinc finger occupies 1-82 (MPKSCAARQC…LKHNAVPTVF (82 aa)). 2 disordered regions span residues 88–125 (PQLVRENTDPTGRSGDATSGERKVLPETGSGECGLGRK) and 139–174 (VGGLGAQVPPHTPETSGVPGQPASPPELKRRLPTQP). The HCFC1-binding motif (HBM) motif lies at 176–179 (DHSY).

As to quaternary structure, component of a THAP1/THAP3-HCFC1-OGT complex that contains at least, either THAP1 or THAP3, HCFC1 and OGT. Interacts directly with OGT and HCFC1 (via its HBM).

Component of a THAP1/THAP3-HCFC1-OGT complex that is required for the regulation of the transcriptional activity of RRM1. This is THAP domain-containing protein 3 (THAP3) from Bos taurus (Bovine).